The sequence spans 443 residues: MRNAIIRCLFYGSLTFGIWTALLFIYLHHNHVSNWQKKSHEPLSAWSPGKKVHQQIIYGSDQIPKPHVIVKRTDEDKAESTLGMDFNHTNPELHNELLKYGFNVIISRSLGIEREVPDTRNKMCLQKHYPARLPTASIVICFHNEEFHALFRTVSSVMNLTPHYFLEEIILVDDMSEVDDLKEKLDYHLETFRGKIKIIRNKKREGLIRARLIGASHASGDVLVILDSHCEVNRVWLEPLLHAIAKDPKMVVRPLIDVIDDRTLEYKPSPVVRGAFDWNLQFKWDNVFSYEMDGPEGPTKPIRSPAMSGGIFAIRRHYFNEIGQYDKDMDFWGGENLELSLRIWMCGGQLFIIPCSRVGHISKKQTRKTSAIISATIHNYLRLVHVWLDEYKEQFFLRKPGLKYVTYGNIHERVQLRKRLGCKSFQWYLDNVFPELEASVNRS.

At 1 to 4 (MRNA) the chain is on the cytoplasmic side. The helical; Signal-anchor for type II membrane protein transmembrane segment at 5 to 27 (IIRCLFYGSLTFGIWTALLFIYL) threads the bilayer. Topologically, residues 28–443 (HHNHVSNWQK…PELEASVNRS (416 aa)) are lumenal. Residue N87 is glycosylated (N-linked (GlcNAc...) asparagine). 2 cysteine pairs are disulfide-bonded: C124–C355 and C346–C422. The catalytic subdomain A stretch occupies residues 133 to 243 (LPTASIVICF…RVWLEPLLHA (111 aa)). Positions 174 and 204 each coordinate substrate. Residue D227 coordinates Mn(2+). S228 contacts substrate. Mn(2+) is bound at residue H229. The interval 301-363 (PIRSPAMSGG…PCSRVGHISK (63 aa)) is catalytic subdomain B. Substrate is bound at residue W332. Mn(2+) is bound at residue H360.

It belongs to the glycosyltransferase 2 family. GalNAc-T subfamily. Requires Mn(2+) as cofactor. As to expression, expressed in testis.

It localises to the late endosome membrane. In terms of biological role, probable inactive glycosyltransferase required during spermatid development. May participate in protein loading into the acrosomes and accumulation of ubiquitin-proteasome systems around the head-tail coupling apparatus region. This Macaca fascicularis (Crab-eating macaque) protein is Inactive polypeptide N-acetylgalactosaminyltransferase-like protein 5 (GALNTL5).